A 452-amino-acid polypeptide reads, in one-letter code: UDP-glycosyltransferase 76E4 (452 aa).

Residues Thr-274, 333 to 335 (APQ), 350 to 358 (HCGWNSTLE), and 372 to 375 (QGEQ) each bind UDP-alpha-D-glucose.

It belongs to the UDP-glycosyltransferase family.

The sequence is that of UDP-glycosyltransferase 76E4 (UGT76E4) from Arabidopsis thaliana (Mouse-ear cress).